The primary structure comprises 471 residues: uncharacterized protein (471 aa).

Transmembrane regions (helical) follow at residues 15-35 (LWGP…TILL), 66-86 (PLQA…IVGV), 89-109 (AIMF…LFAM), 147-167 (WLGV…IMVQ), 179-199 (FSFN…LVVI), 210-230 (EFVV…IVLM), 237-257 (AFFS…GGFA), 303-323 (VIGI…IVLA), 353-373 (GYFV…VVIF), 386-406 (LAGH…AAGG), and 410-430 (IWGV…IALL).

It belongs to the alanine or glycine:cation symporter (AGCS) (TC 2.A.25) family.

The protein localises to the cell membrane. This is an uncharacterized protein from Bacillus subtilis (strain 168).